The primary structure comprises 476 residues: Neuropeptide receptor 18 (476 aa).

The Extracellular portion of the chain corresponds to M1–M61. 2 N-linked (GlcNAc...) asparagine glycosylation sites follow: N43 and N57. Residues L62–L82 traverse the membrane as a helical segment. Residues A83–T102 are Cytoplasmic-facing. The chain crosses the membrane as a helical span at residues Y103–I123. The Extracellular segment spans residues D124–L139. C137 and C228 are oxidised to a cystine. The chain crosses the membrane as a helical span at residues F140–I160. Topologically, residues D161–T179 are cytoplasmic. The helical transmembrane segment at V180 to L200 threads the bilayer. Topologically, residues Y201–L236 are extracellular. A helical transmembrane segment spans residues F237–I257. Over Y258–T291 the chain is Cytoplasmic. Residues I292–W312 form a helical membrane-spanning segment. At T313–T334 the chain is on the extracellular side. A helical transmembrane segment spans residues A335–I355. At N356–L476 the chain is on the cytoplasmic side.

Belongs to the G-protein coupled receptor 1 family. Expressed in sensory neurons including ASER.

It localises to the cell membrane. In terms of biological role, probable receptor for neuropeptide ligand nlp-9 that plays a role in octopamine signaling and specifically, the octapamine inhibition of aversion responses in olfactory sensory neurons. In AWB olfactory sensory neurons, required for the detection of preferred food sources. This chain is Neuropeptide receptor 18, found in Caenorhabditis elegans.